Here is a 491-residue protein sequence, read N- to C-terminus: Cholesterol 22-monohydroxylase CYP90B51 (491 aa).

The helical transmembrane segment at 6-26 threads the bilayer; sequence ITFYCLSSILSVLLIFIFILI. Heme is bound at residue C437.

The protein belongs to the cytochrome P450 family. In terms of tissue distribution, mainly expressed in leaves and seed pods and, to a lower extent, in flowers and stems.

It localises to the membrane. It carries out the reaction cholesterol + reduced [NADPH--hemoprotein reductase] + O2 = (22S)-22-hydroxycholesterol + oxidized [NADPH--hemoprotein reductase] + H2O + H(+). Its pathway is steroid metabolism; cholesterol metabolism. In terms of biological role, canonical brassinosteroid (BR)-biosynthetic enzyme capable of converting cholesterol to 22S-hydroxycholesterol via sterol-C22 hydroxylation. This chain is Cholesterol 22-monohydroxylase CYP90B51, found in Trigonella foenum-graecum (Fenugreek).